A 690-amino-acid chain; its full sequence is MKVQIVFFSITVFIFVLFLLSVESNTKIKIVPSFLENSNEIEDLYINLDSDSKSSEHTTSSSSSSNSKNKGDSSSSSSNSGSSSNSIISGDSNSKDAPTTSSDSLSPATPIPTDGLLSASTYVTFTGGKVLCENITFCPNGYMYSSDYACNYDIVQNDPATHRGDWNDGIKMFEDPLPKNTTIDQVEGISFTISGAVGCQVTSSATTLEFYIQDLLVLTNTTSRYDICTCGSCYVTFGTEVYKYNMLGYNITGENKFQIQVSVNSMCATTIGITLYYKPPTITPTPTITPTPTITPTPTITPTVTPTATPSTTPSTTPTTTPSTPTPTPTKSPYSGALSPQVKKYIIIASSITGGLLISIFSFVFIRKRLNSKRSGYTQIKDGKDIDTQQIKIGVRIGKGNFGEVYLGTWRGSQVAVKKLPAHNINENILKEFHREINLMKNLRHPNVIQFLGSCLISPDICICTEYMPRGSLYSILHNEKIKISWSLVKRMMIDAAKGIIYLHGSTPVILHRDLKSHNLLVDENWKVKVADFGLSTIEQQGATMTACGTPCWTSPEVLRSQRYTEKADVYSFGIILWECATRQDPYFGIPPFQVIFAVGREGMRPPTPKYGPPKYIQLLKDCLNENPSQRPTMEQCLEILESIETKGFDDIPVNNNNNNNSNNNENNNENNNNSDNNNNDINYSNRVIN.

Residues 1–24 form the signal peptide; it reads MKVQIVFFSITVFIFVLFLLSVES. The interval 51–110 is disordered; sequence DSKSSEHTTSSSSSSNSKNKGDSSSSSSNSGSSSNSIISGDSNSKDAPTTSSDSLSPATP. A compositionally biased stretch (low complexity) spans 57–96; the sequence is HTTSSSSSSNSKNKGDSSSSSSNSGSSSNSIISGDSNSKD. Polar residues predominate over residues 97–107; sequence APTTSSDSLSP. 4 N-linked (GlcNAc...) asparagine glycosylation sites follow: Asn-134, Asn-180, Asn-220, and Asn-250. A disordered region spans residues 287 to 335; the sequence is TITPTPTITPTPTITPTVTPTATPSTTPSTTPTTTPSTPTPTPTKSPYS. The span at 296-323 shows a compositional bias: low complexity; that stretch reads PTPTITPTVTPTATPSTTPSTTPTTTPS. Residues 346-366 traverse the membrane as a helical segment; sequence IIIASSITGGLLISIFSFVFI. A Protein kinase domain is found at 391 to 644; that stretch reads IKIGVRIGKG…EQCLEILESI (254 aa). ATP is bound by residues 397–405 and Lys-418; that span reads IGKGNFGEV. Asp-514 (proton acceptor) is an active-site residue. Residues 649-690 form a disordered region; the sequence is FDDIPVNNNNNNNSNNNENNNENNNNSDNNNNDINYSNRVIN. Over residues 655-681 the composition is skewed to low complexity; it reads NNNNNNNSNNNENNNENNNNSDNNNND.

The protein belongs to the protein kinase superfamily. TKL Ser/Thr protein kinase family.

It is found in the membrane. The catalysed reaction is L-seryl-[protein] + ATP = O-phospho-L-seryl-[protein] + ADP + H(+). The enzyme catalyses L-threonyl-[protein] + ATP = O-phospho-L-threonyl-[protein] + ADP + H(+). The polypeptide is Probable serine/threonine-protein kinase drkB (drkB) (Dictyostelium discoideum (Social amoeba)).